The chain runs to 620 residues: LysM domain receptor-like kinase 3 (620 aa).

Residues 1 to 23 (MNLKNGLLLFILFLDCVFFKVES) form the signal peptide. The Extracellular portion of the chain corresponds to 24–231 (KCVKGCDVAL…YSRTGIAKGS (208 aa)). Disulfide bonds link Cys-25-Cys-92, Cys-29-Cys-154, and Cys-90-Cys-152. The N-linked (GlcNAc...) asparagine glycan is linked to Asn-46. Residues 46–72 (NISNFMQSKIVLTNSFDVIMSYNRDVV) form the LysM 1; degenerate domain. LysM domains follow at residues 102–148 (FEYT…KINV) and 167–210 (VTYP…VFIP). Chitin contacts are provided by residues 108–114 (EGDDYDL) and 136–142 (DPNHIPV). 2 N-linked (GlcNAc...) asparagine glycosylation sites follow: Asn-147 and Asn-199. Residues 232 to 252 (AVGIAMAGIFGLLLFVIYIYA) traverse the membrane as a helical segment. Topologically, residues 253 to 620 (KYFQKKEEEK…QSLINLLSTR (368 aa)) are cytoplasmic. Polar residues predominate over residues 265 to 278 (LPQTSRAFSTQDAS). The segment at 265–292 (LPQTSRAFSTQDASGSAEYETSGSSGHA) is disordered. Ser-269 and Ser-273 each carry phosphoserine. Residues 322–595 (FSLDNKIGQG…RSIVVALMTL (274 aa)) form the Protein kinase domain. ATP contacts are provided by residues 328–336 (IGQGGFGAV) and Lys-349. The Proton acceptor role is filled by Asp-441.

Belongs to the protein kinase superfamily. Ser/Thr protein kinase family. As to quaternary structure, forms homodimers and homooligomers. Forms heteromeric complexes with NFP at the cell periphery in nodules. Interacts with PUB1. In terms of processing, autophosphorylated. In terms of tissue distribution, expressed in the epidermal and root hair cells of the developing root hair zone during nonsymbiotic growth. Accumulates in roots and nodules during symbiotic growth with rhizobia. Localized at the cell periphery in a narrow zone of about two cell layers (e.g. L1/L2 zone) at the nodule apex upon infection by rhizobia, from the meristem to the infection zone (at protein level).

The protein localises to the cell membrane. Its subcellular location is the vacuole lumen. It catalyses the reaction L-seryl-[protein] + ATP = O-phospho-L-seryl-[protein] + ADP + H(+). It carries out the reaction L-threonyl-[protein] + ATP = O-phospho-L-threonyl-[protein] + ADP + H(+). Functionally, putative receptor for S.meliloti Nod factor signals essential for the establishment of the nitrogen-fixing, root nodule symbiosis with S.meliloti. Involved in the control of root hair curling after S.meliloti infection, probably by modulating the reorganization of the microtubular cytoskeleton in epidermal and cortical cells. Regulates a subset of Nod factor-induced genes. The polypeptide is LysM domain receptor-like kinase 3 (Medicago truncatula (Barrel medic)).